The sequence spans 534 residues: Phosphoenolpyruvate carboxykinase (ATP) (534 aa).

3 residues coordinate substrate: Arg-60, Tyr-195, and Lys-201. ATP is bound by residues Lys-201, His-221, and 237–245 (GLSGTGKTT). Lys-201 and His-221 together coordinate Mn(2+). Asp-258 lines the Mn(2+) pocket. ATP-binding residues include Glu-287, Arg-324, and Thr-449. Residue Arg-324 coordinates substrate.

It belongs to the phosphoenolpyruvate carboxykinase (ATP) family. Mn(2+) serves as cofactor.

The protein localises to the cytoplasm. It carries out the reaction oxaloacetate + ATP = phosphoenolpyruvate + ADP + CO2. It functions in the pathway carbohydrate biosynthesis; gluconeogenesis. In terms of biological role, involved in the gluconeogenesis. Catalyzes the conversion of oxaloacetate (OAA) to phosphoenolpyruvate (PEP) through direct phosphoryl transfer between the nucleoside triphosphate and OAA. The chain is Phosphoenolpyruvate carboxykinase (ATP) from Flavobacterium johnsoniae (strain ATCC 17061 / DSM 2064 / JCM 8514 / BCRC 14874 / CCUG 350202 / NBRC 14942 / NCIMB 11054 / UW101) (Cytophaga johnsonae).